Here is a 234-residue protein sequence, read N- to C-terminus: Rhodanese-like domain-containing protein 9, chloroplastic (234 aa).

A chloroplast-targeting transit peptide spans 1–47 (MAGIISPSPTALYFTSNVGGRRLKAVSWAGKSVSGNVIRRRSLRIAA). The region spanning 62–185 (AEEGYSVVDV…VKPGTFESVG (124 aa)) is the Rhodanese domain. Residue Cys145 is the Cysteine persulfide intermediate of the active site. Residues 204 to 222 (ISAVLGTVLVCAYLFIQFF) form a helical membrane-spanning segment.

It localises to the plastid. The protein resides in the chloroplast. The protein localises to the membrane. This is Rhodanese-like domain-containing protein 9, chloroplastic (STR9) from Arabidopsis thaliana (Mouse-ear cress).